A 340-amino-acid polypeptide reads, in one-letter code: Selenide, water dikinase (340 aa).

Sec17 is a catalytic residue. Sec17 is a non-standard amino acid (selenocysteine). ATP is bound by residues Lys20 and Asn45–Glu47. A Mg(2+)-binding site is contributed by Asp48. ATP is bound by residues Asp65, Asp88, and Gly136–Thr138. Asp88 provides a ligand contact to Mg(2+). Asp224 lines the Mg(2+) pocket.

It belongs to the selenophosphate synthase 1 family. Class I subfamily. Homodimer. The cofactor is Mg(2+).

It carries out the reaction hydrogenselenide + ATP + H2O = selenophosphate + AMP + phosphate + 2 H(+). In terms of biological role, synthesizes selenophosphate from selenide and ATP. In Campylobacter jejuni (strain RM1221), this protein is Selenide, water dikinase.